The chain runs to 507 residues: Probable circularly permuted 1,3-beta-glucanase P23A10.11c YJL171C (507 aa).

Positions 1–22 are cleaved as a signal peptide; it reads MIAKSFIASFLFLCFAFSGVKA. Low complexity predominate over residues 228–264; that stretch reads AAPPDSASESTPASTSYASSTTSATSTSTTSGSSGSS. The interval 228 to 266 is disordered; sequence AAPPDSASESTPASTSYASSTTSATSTSTTSGSSGSSDW. Residues 412-417 carry the ExDxxE motif motif; sequence EFDIFE. N-linked (GlcNAc...) asparagine glycosylation is present at Asn480.

Belongs to the PGA52 family.

It localises to the secreted. The enzyme catalyses Hydrolysis of (1-&gt;3)-beta-D-glucosidic linkages in (1-&gt;3)-beta-D-glucans.. In terms of biological role, probable circularly permuted 1,3-beta-glucanase involved in cell wall modification through beta-1,3-glucan network alterations such as increased branching or remodeling. In Schizosaccharomyces pombe (strain 972 / ATCC 24843) (Fission yeast), this protein is Probable circularly permuted 1,3-beta-glucanase P23A10.11c YJL171C.